The following is a 157-amino-acid chain: Protein Smg (157 aa).

This sequence belongs to the Smg family.

The protein is Protein Smg of Serratia proteamaculans (strain 568).